A 41-amino-acid chain; its full sequence is Large ribosomal subunit protein bL36 (41 aa).

Belongs to the bacterial ribosomal protein bL36 family.

The sequence is that of Large ribosomal subunit protein bL36 from Caulobacter vibrioides (strain ATCC 19089 / CIP 103742 / CB 15) (Caulobacter crescentus).